Consider the following 306-residue polypeptide: Putative dihydroorotate dehydrogenase A (fumarate) (306 aa).

Residues Ser24 and 48 to 49 contribute to the FMN site; that span reads KS. Substrate is bound by residues Lys48, 72–76, and Asn129; that span reads NAVGL. Residue Asn129 participates in FMN binding. The active-site Nucleophile is Cys132. The FMN site is built by Lys167 and Ile192. 193–194 lines the substrate pocket; that stretch reads NS. FMN-binding positions include Gly218 and 244–245; that span reads GG.

Belongs to the dihydroorotate dehydrogenase family. Type 1 subfamily. As to quaternary structure, homodimer. Requires FMN as cofactor.

The protein localises to the cytoplasm. The enzyme catalyses (S)-dihydroorotate + fumarate = orotate + succinate. It functions in the pathway pyrimidine metabolism; UMP biosynthesis via de novo pathway. In terms of biological role, catalyzes the conversion of dihydroorotate to orotate with fumarate as the electron acceptor. This Aeropyrum pernix (strain ATCC 700893 / DSM 11879 / JCM 9820 / NBRC 100138 / K1) protein is Putative dihydroorotate dehydrogenase A (fumarate) (pyrD).